The chain runs to 95 residues: Citrate lyase acyl carrier protein (95 aa).

Position 14 is an O-(phosphoribosyl dephospho-coenzyme A)serine (S14).

Belongs to the CitD family. As to quaternary structure, oligomer with a subunit composition of (alpha,beta,gamma)6.

The protein resides in the cytoplasm. Covalent carrier of the coenzyme of citrate lyase. The protein is Citrate lyase acyl carrier protein of Haemophilus ducreyi (strain 35000HP / ATCC 700724).